The primary structure comprises 25 residues: Chaperonin GroEL (25 aa).

Belongs to the chaperonin (HSP60) family. In terms of assembly, forms a cylinder of 14 subunits composed of two heptameric rings stacked back-to-back. Interacts with the co-chaperonin GroES.

It is found in the cytoplasm. It carries out the reaction ATP + H2O + a folded polypeptide = ADP + phosphate + an unfolded polypeptide.. Its function is as follows. Together with its co-chaperonin GroES, plays an essential role in assisting protein folding. The GroEL-GroES system forms a nano-cage that allows encapsulation of the non-native substrate proteins and provides a physical environment optimized to promote and accelerate protein folding. This chain is Chaperonin GroEL, found in Delftia acidovorans (Pseudomonas acidovorans).